A 199-amino-acid chain; its full sequence is Probable adenylyl-sulfate kinase (199 aa).

34-41 (GLSGSGKS) contacts ATP. Ser-108 acts as the Phosphoserine intermediate in catalysis.

It belongs to the APS kinase family.

It catalyses the reaction adenosine 5'-phosphosulfate + ATP = 3'-phosphoadenylyl sulfate + ADP + H(+). It functions in the pathway sulfur metabolism; hydrogen sulfide biosynthesis; sulfite from sulfate: step 2/3. Functionally, catalyzes the synthesis of activated sulfate. This chain is Probable adenylyl-sulfate kinase (yisZ), found in Bacillus subtilis (strain 168).